The sequence spans 260 residues: Isoprenyl transferase (260 aa).

D40 is an active-site residue. Position 40 (D40) interacts with Mg(2+). Residues 41-44, W45, R53, H57, and 85-87 each bind substrate; these read GNGR and STE. The active-site Proton acceptor is N88. Substrate-binding positions include W89, R91, R208, and 214–216; that span reads RLS. E227 provides a ligand contact to Mg(2+).

Belongs to the UPP synthase family. In terms of assembly, homodimer. Mg(2+) is required as a cofactor.

Its function is as follows. Catalyzes the condensation of isopentenyl diphosphate (IPP) with allylic pyrophosphates generating different type of terpenoids. This chain is Isoprenyl transferase, found in Bacillus subtilis (strain 168).